Here is a 506-residue protein sequence, read N- to C-terminus: Glycerol kinase (506 aa).

ADP is bound at residue Thr-12. The ATP site is built by Thr-12, Thr-13, and Ser-14. A sn-glycerol 3-phosphate-binding site is contributed by Thr-12. Arg-16 contributes to the ADP binding site. Positions 82, 83, 134, and 246 each coordinate sn-glycerol 3-phosphate. Glycerol is bound by residues Arg-82, Glu-83, Tyr-134, Asp-246, and Gln-247. ADP is bound by residues Thr-268 and Gly-312. Positions 268, 312, 316, and 413 each coordinate ATP. Positions 413 and 417 each coordinate ADP.

The protein belongs to the FGGY kinase family.

The catalysed reaction is glycerol + ATP = sn-glycerol 3-phosphate + ADP + H(+). The protein operates within polyol metabolism; glycerol degradation via glycerol kinase pathway; sn-glycerol 3-phosphate from glycerol: step 1/1. With respect to regulation, inhibited by fructose 1,6-bisphosphate (FBP). Key enzyme in the regulation of glycerol uptake and metabolism. Catalyzes the phosphorylation of glycerol to yield sn-glycerol 3-phosphate. In Leifsonia xyli subsp. xyli (strain CTCB07), this protein is Glycerol kinase.